The sequence spans 123 residues: Thioredoxin H-type 1 (123 aa).

Position 2 is an N-acetylalanine (Ala-2). The Thioredoxin domain maps to 2 to 119; the sequence is AATAEVIPAG…IEAKLLKHSQ (118 aa). A disulfide bridge links Cys-45 with Cys-48.

This sequence belongs to the thioredoxin family. Plant H-type subfamily.

It localises to the cytoplasm. In terms of biological role, participates in various redox reactions through the reversible oxidation of the active center dithiol to a disulfide. The H form is known to activate a number of cytosolic enzymes. This is Thioredoxin H-type 1 (THL-1) from Brassica napus (Rape).